A 161-amino-acid polypeptide reads, in one-letter code: RNA pyrophosphohydrolase (161 aa).

Residues 12 to 154 (PYRPGVGMMI…KRKLYQAVVK (143 aa)) form the Nudix hydrolase domain. The Nudix box signature appears at 46–67 (GGIVPGETPSIAAMREMLEEIG).

It belongs to the Nudix hydrolase family. RppH subfamily. A divalent metal cation is required as a cofactor.

Its function is as follows. Accelerates the degradation of transcripts by removing pyrophosphate from the 5'-end of triphosphorylated RNA, leading to a more labile monophosphorylated state that can stimulate subsequent ribonuclease cleavage. The chain is RNA pyrophosphohydrolase from Rickettsia rickettsii (strain Iowa).